A 271-amino-acid polypeptide reads, in one-letter code: Neurexophilin-1 (271 aa).

An N-terminal signal peptide occupies residues 1–21 (MQAACWYVLLLLQPTVYLVTC). Residues 22–97 (ANLTNGGKSE…WDWLRNSTDL (76 aa)) are II. Residues asparagine 23, asparagine 68, asparagine 93, asparagine 146, asparagine 156, and asparagine 162 are each glycosylated (N-linked (GlcNAc...) asparagine). Residues 98–176 (QEPRPRAKRR…LVPPTKIVEF (79 aa)) are III. The segment at 177 to 185 (DLAQQTVID) is IV (linker domain). Residues 186-271 (AKDSKSFNCR…HSDTPYFPSG (86 aa)) are v (Cys-rich).

It belongs to the neurexophilin family. May be proteolytically processed at the boundary between the N-terminal non-conserved and the central conserved domain in neuron-like cells. As to expression, highest level in brain.

Its subcellular location is the secreted. Functionally, may be signaling molecules that resemble neuropeptides. Ligand for alpha-neurexins. The sequence is that of Neurexophilin-1 (Nxph1) from Rattus norvegicus (Rat).